The primary structure comprises 480 residues: Chromosomal replication initiator protein DnaA (480 aa).

The tract at residues 1-71 (MNLTKVWNTT…REQLGSVVGF (71 aa)) is domain I, interacts with DnaA modulators. The segment at 71-139 (FPVDVRIVLA…LELHRAVRSS (69 aa)) is domain II. The segment at 91–115 (SINGRHAARDTRKSDHHAPLSGGYG) is disordered. Residues 97–108 (AARDTRKSDHHA) show a composition bias toward basic and acidic residues. A domain III, AAA+ region region spans residues 140-356 (MLNPRYTFDR…GCLNRVTAYA (217 aa)). Glycine 184, glycine 186, lysine 187, and threonine 188 together coordinate ATP. The tract at residues 357–480 (QMYNIPVTIE…IRERLMNSAV (124 aa)) is domain IV, binds dsDNA.

Belongs to the DnaA family. As to quaternary structure, oligomerizes as a right-handed, spiral filament on DNA at oriC.

The protein resides in the cytoplasm. Plays an essential role in the initiation and regulation of chromosomal replication. ATP-DnaA binds to the origin of replication (oriC) to initiate formation of the DNA replication initiation complex once per cell cycle. Binds the DnaA box (a 9 base pair repeat at the origin) and separates the double-stranded (ds)DNA. Forms a right-handed helical filament on oriC DNA; dsDNA binds to the exterior of the filament while single-stranded (ss)DNA is stabiized in the filament's interior. The ATP-DnaA-oriC complex binds and stabilizes one strand of the AT-rich DNA unwinding element (DUE), permitting loading of DNA polymerase. After initiation quickly degrades to an ADP-DnaA complex that is not apt for DNA replication. Binds acidic phospholipids. This chain is Chromosomal replication initiator protein DnaA, found in Roseiflexus castenholzii (strain DSM 13941 / HLO8).